A 219-amino-acid chain; its full sequence is GTP cyclohydrolase 1 (219 aa).

The interval 1–37 (MDAVLKSLSVRLPDAADKRSDTGRPERVTERPTRQEA) is disordered. A compositionally biased stretch (basic and acidic residues) spans 14-37 (DAADKRSDTGRPERVTERPTRQEA). Positions 108, 111, and 179 each coordinate Zn(2+).

This sequence belongs to the GTP cyclohydrolase I family. As to quaternary structure, homomer.

It carries out the reaction GTP + H2O = 7,8-dihydroneopterin 3'-triphosphate + formate + H(+). It participates in cofactor biosynthesis; 7,8-dihydroneopterin triphosphate biosynthesis; 7,8-dihydroneopterin triphosphate from GTP: step 1/1. The polypeptide is GTP cyclohydrolase 1 (Methylobacterium sp. (strain 4-46)).